The chain runs to 151 residues: Protein NrdI (151 aa).

Belongs to the NrdI family.

Functionally, probably involved in ribonucleotide reductase function. In Mycoplasmopsis pulmonis (strain UAB CTIP) (Mycoplasma pulmonis), this protein is Protein NrdI.